The sequence spans 285 residues: Tetraspanin-3 (285 aa).

The Cytoplasmic portion of the chain corresponds to 1–6; sequence MRTSNH. Residues 7–27 traverse the membrane as a helical segment; that stretch reads LIGLVNFLTFLLSIPILGGGI. Residues 28–43 lie on the Extracellular side of the membrane; it reads WLSSRANSTDCLRFLQ. The N-linked (GlcNAc...) asparagine glycan is linked to Asn-34. The chain crosses the membrane as a helical span at residues 44–64; sequence WPLIVIGISIMVVSLAGFAGA. The Cytoplasmic segment spans residues 65 to 71; it reads CYRNKFL. A helical transmembrane segment spans residues 72–92; it reads MWLYLVVMLLIIAALIGFIIF. The Extracellular portion of the chain corresponds to 93-235; it reads AYAVTDKGSG…LGSLKKSWRK (143 aa). N-linked (GlcNAc...) asparagine glycosylation is present at Asn-187. The chain crosses the membrane as a helical span at residues 236–256; sequence VSVINIVVLIILVIFYVIAYA. Residues 257 to 285 are Cytoplasmic-facing; it reads AYRNVKRIDNDEPAGEARMTKSHPSHFHL.

The protein belongs to the tetraspanin (TM4SF) family.

The protein localises to the cell membrane. Functionally, may be involved in the regulation of cell differentiation. The protein is Tetraspanin-3 (TET3) of Arabidopsis thaliana (Mouse-ear cress).